The primary structure comprises 533 residues: GMP synthase [glutamine-hydrolyzing] (533 aa).

A Glutamine amidotransferase type-1 domain is found at 12–206 (TILVLDFGSQ…AVGICGAEQK (195 aa)). C88 acts as the Nucleophile in catalysis. Active-site residues include H180 and E182. One can recognise a GMPS ATP-PPase domain in the interval 207–408 (WTMAEFIGQE…LGISPELVGR (202 aa)). An ATP-binding site is contributed by 235-241 (SGGVDST). XMP is bound by residues R308, D470, K525, and E531.

As to quaternary structure, homodimer. Requires Mg(2+) as cofactor.

It is found in the cytoplasm. The protein localises to the cytosol. It catalyses the reaction XMP + L-glutamine + ATP + H2O = GMP + L-glutamate + AMP + diphosphate + 2 H(+). Its pathway is purine metabolism; GMP biosynthesis; GMP from XMP (L-Gln route): step 1/1. Catalyzes the conversion of xanthine monophosphate (XMP) to GMP in the presence of glutamine and ATP through an adenyl-XMP intermediate. This is GMP synthase [glutamine-hydrolyzing] (gua1) from Emericella nidulans (strain FGSC A4 / ATCC 38163 / CBS 112.46 / NRRL 194 / M139) (Aspergillus nidulans).